A 311-amino-acid chain; its full sequence is Olfactory receptor 10G7 (311 aa).

Topologically, residues 1–23 (MSNATLLTAFILTGLPHAPGLDA) are extracellular. N-linked (GlcNAc...) asparagine glycosylation is present at Asn3. The chain crosses the membrane as a helical span at residues 24–44 (PLFGIFLVVYVLTVLGNLLIL). Residues 45–52 (LVIRVDSH) lie on the Cytoplasmic side of the membrane. Residues 53–73 (LHTPMYYFLTNLSFIDMWFST) traverse the membrane as a helical segment. The Extracellular segment spans residues 74–98 (VTVPKMLMTLVSPSGRTISFHSCVA). The cysteines at positions 96 and 188 are disulfide-linked. Residues 99-119 (QLYFFHFLGSTECFLYTVMSY) form a helical membrane-spanning segment. At 120-138 (DRYLAISYPLRYTNMMTGR) the chain is on the cytoplasmic side. Residues 139 to 159 (SCALLATGTWLSGSLHSAVQT) form a helical membrane-spanning segment. The Extracellular segment spans residues 160 to 196 (ILTFHLPYCGPNQIQHYFCDAPPILKLACADTSANEM). The chain crosses the membrane as a helical span at residues 197–216 (VIFVNIGLVASGCFVLIVLS). Over 217–236 (YVSIVCSILRIRTSEGRHRA) the chain is Cytoplasmic. The chain crosses the membrane as a helical span at residues 237 to 257 (FQTCASHCIVVLCFFGPGLFI). The Extracellular portion of the chain corresponds to 258–268 (YLRPGSRDALH). A helical membrane pass occupies residues 269–289 (GVVAVFYTTLTPLFNPVVYTL). The Cytoplasmic portion of the chain corresponds to 290-311 (RNKEVKKALLKLKNGSVFAQGE).

Belongs to the G-protein coupled receptor 1 family.

The protein localises to the cell membrane. Its function is as follows. Odorant receptor. The sequence is that of Olfactory receptor 10G7 (OR10G7) from Homo sapiens (Human).